Here is a 789-residue protein sequence, read N- to C-terminus: Aconitate hydratase, mitochondrial (789 aa).

A mitochondrion-targeting transit peptide spans 1-32 (MFCKISRAPARMGSRIFTQSTLRSFSCAPVAA). Substrate is bound by residues Gln-106 and 199-201 (DSH). [4Fe-4S] cluster contacts are provided by Cys-392, Cys-455, and Cys-458. Residues Arg-481, Arg-486, Arg-613, and 676-677 (SR) contribute to the substrate site.

The protein belongs to the aconitase/IPM isomerase family. In terms of assembly, monomer. The cofactor is [4Fe-4S] cluster.

Its subcellular location is the mitochondrion. The enzyme catalyses citrate = D-threo-isocitrate. Its pathway is carbohydrate metabolism; tricarboxylic acid cycle; isocitrate from oxaloacetate: step 2/2. In terms of biological role, catalyzes the isomerization of citrate to isocitrate via cis-aconitate, a step in the citric acid cycle. The protein is Aconitate hydratase, mitochondrial of Schizosaccharomyces pombe (strain 972 / ATCC 24843) (Fission yeast).